The primary structure comprises 363 residues: UDP-N-acetylglucosamine--N-acetylmuramyl-(pentapeptide) pyrophosphoryl-undecaprenol N-acetylglucosamine transferase (363 aa).

UDP-N-acetyl-alpha-D-glucosamine is bound by residues 12 to 14 (TAG), serine 196, and glutamine 291.

The protein belongs to the glycosyltransferase 28 family. MurG subfamily.

The protein localises to the cell inner membrane. The enzyme catalyses di-trans,octa-cis-undecaprenyl diphospho-N-acetyl-alpha-D-muramoyl-L-alanyl-D-glutamyl-meso-2,6-diaminopimeloyl-D-alanyl-D-alanine + UDP-N-acetyl-alpha-D-glucosamine = di-trans,octa-cis-undecaprenyl diphospho-[N-acetyl-alpha-D-glucosaminyl-(1-&gt;4)]-N-acetyl-alpha-D-muramoyl-L-alanyl-D-glutamyl-meso-2,6-diaminopimeloyl-D-alanyl-D-alanine + UDP + H(+). Its pathway is cell wall biogenesis; peptidoglycan biosynthesis. Its function is as follows. Cell wall formation. Catalyzes the transfer of a GlcNAc subunit on undecaprenyl-pyrophosphoryl-MurNAc-pentapeptide (lipid intermediate I) to form undecaprenyl-pyrophosphoryl-MurNAc-(pentapeptide)GlcNAc (lipid intermediate II). The sequence is that of UDP-N-acetylglucosamine--N-acetylmuramyl-(pentapeptide) pyrophosphoryl-undecaprenol N-acetylglucosamine transferase from Legionella pneumophila (strain Corby).